We begin with the raw amino-acid sequence, 269 residues long: Enoyl-[acyl-carrier-protein] reductase [NADH] (269 aa).

Residues 20-21 (SI), 64-65 (DV), and 95-96 (IG) each bind NAD(+). Residue tyrosine 158 coordinates substrate. NAD(+)-binding residues include lysine 165 and isoleucine 194. Threonine 266 is modified (phosphothreonine).

The protein belongs to the short-chain dehydrogenases/reductases (SDR) family. FabI subfamily. As to quaternary structure, homodimer. Homotetramer. Is phosphorylated in vivo. Phosphorylation on Thr-266 decreases enzymatic activity.

It is found in the secreted. It localises to the cell wall. It catalyses the reaction a 2,3-saturated acyl-[ACP] + NAD(+) = a (2E)-enoyl-[ACP] + NADH + H(+). It carries out the reaction a 2,3-saturated acyl-CoA + NAD(+) = a (2E)-enoyl-CoA + NADH + H(+). The catalysed reaction is (2E)-octenoyl-CoA + NADH + H(+) = octanoyl-CoA + NAD(+). The enzyme catalyses (2E)-dodecenoyl-CoA + NADH + H(+) = dodecanoyl-CoA + NAD(+). The protein operates within lipid metabolism; mycolic acid biosynthesis. With respect to regulation, inhA activity is controlled via phosphorylation: phosphorylation on Thr-266 decreases InhA activity and likely negatively regulates biosynthesis of mycolic acids and growth of the bacterium. InhA activity is likely inhibited by activated isoniazid, hexadecynoyl-CoA and octadecynoyl-CoA, which also block the biosynthesis of mycolic acids. The antitubercular pro-drug isoniazid (INH) is oxidatively activated by the catalase-peroxidase KatG and then covalently binds NAD to form an adduct that inhibits the activity of InhA. The inhibitory adduct is the isonicotinic-acyl-NADH where the isonicotinic-acyl group replaces the 4S (and not the 4R) hydrogen of NADH. Similarly, the antitubercular pro-drugs ethionamide (ETH) and prothionamide (PTH) are activated by the flavoprotein monooxygenase EthA, and forms an adduct with NAD (ETH-NAD and PTH-NAD, respectively) that is a tight-binding inhibitor of InhA. In terms of biological role, enoyl-ACP reductase of the type II fatty acid syntase (FAS-II) system, which is involved in the biosynthesis of mycolic acids, a major component of mycobacterial cell walls. Catalyzes the NADH-dependent reduction of the double bond of 2-trans-enoyl-[acyl-carrier protein], an essential step in the fatty acid elongation cycle of the FAS-II pathway. Shows preference for long-chain fatty acyl thioester substrates (&gt;C16), and can also use 2-trans-enoyl-CoAs as alternative substrates. The mycobacterial FAS-II system utilizes the products of the FAS-I system as primers to extend fatty acyl chain lengths up to C56, forming the meromycolate chain that serves as the precursor for final mycolic acids. Its function is as follows. Is the primary target of the first-line antitubercular drug isoniazid (INH) and of the second-line drug ethionamide (ETH). Overexpressed inhA confers INH and ETH resistance to M.smegmatis. The mechanism of isoniazid action against InhA is covalent attachment of the activated form of the drug to the nicotinamide ring of NAD and binding of the INH-NAD adduct to the active site of InhA. Similarly, the ETH-NAD adduct binds InhA. The protein is Enoyl-[acyl-carrier-protein] reductase [NADH] of Mycolicibacterium smegmatis (strain ATCC 700084 / mc(2)155) (Mycobacterium smegmatis).